Consider the following 950-residue polypeptide: Protocadherin alpha-9 (950 aa).

An N-terminal signal peptide occupies residues 1–29 (MLYSSRGDPEGQPLLLSLLILAMWVVGSG). Cadherin domains lie at 30–133 (QLHY…PPVF), 134–242 (PATQ…APVF), 243–350 (DRTL…APQL), 351–455 (TIKT…APAF), 456–565 (AQPE…APAL), and 588–678 (GVVV…APKS). The Extracellular portion of the chain corresponds to 30 to 697 (QLHYSVPEEA…GPEVTLVDVN (668 aa)). 2 N-linked (GlcNAc...) asparagine glycosylation sites follow: Asn-254 and Asn-265. N-linked (GlcNAc...) asparagine glycosylation occurs at Asn-548. A helical membrane pass occupies residues 698-718 (VYLIIAICAVSSLLVLTLLLY). Residues 719 to 950 (TVLRCSAMPT…GNSTTDNSDQ (232 aa)) lie on the Cytoplasmic side of the membrane. Residues 734–737 (PGKP) form a PXXP 1 repeat. The 5 X 4 AA repeats of P-X-X-P stretch occupies residues 734–894 (PGKPTLVCSS…PDKFIIPGSP (161 aa)). Disordered regions lie at residues 759-808 (CSGE…DWRY) and 827-950 (ILRA…NSDQ). Residues 789-798 (PSASSDSSGK) are compositionally biased toward polar residues. 4 PXXP repeats span residues 799–802 (PRQP), 832–835 (PGGP), 873–876 (PGNP), and 891–894 (PGSP). A compositionally biased stretch (basic and acidic residues) spans 909–923 (DKSDFITFGKKEETK).

The protein localises to the cell membrane. In terms of biological role, potential calcium-dependent cell-adhesion protein. May be involved in the establishment and maintenance of specific neuronal connections in the brain. This is Protocadherin alpha-9 (PCDHA9) from Pan troglodytes (Chimpanzee).